Here is an 860-residue protein sequence, read N- to C-terminus: MQEQYRPDLIEAEVQQYWAENKTFKAIKDTNKPKYYCLSMFPYPSGRLHMGHVRNYTIGDVVSRYQRMNGKNVLQPMGWDAFGLPAEGAAIKNKTAPAKWTYENIDYMKNQLKILGFGFDWDREVTTCKPDYYKWEQWFFTELYKKGLVYKKTSTVNWCPNDETVLANEQVHEGCCWRCDTPVEQKEIPQWFIKITDYAEQLLGGLDHLPLWPDQVKTMQRNWIGRSEGVEITFQLANSEDNLTVYTTRPDTFFGVSYVAVAAAHPLAEKAAENNPELAQFIQECKNTKVAEAELATMEKKGMATGVYAIHPLTGEKVPVWVANFVLMHYGTGAVMAVPGHDERDAEFARKYGLPLLNVIKPINGEPLLEHELPYCEHGILFNSGEFNGLDFDAAFNAIADKLEALGKGKRQVNYRLRDWGVSRQRYWGAPIPMLTLENGEVVPAPLQDLPIELPEDVVMDGVKSPIKADPEWAKTTYNGQPALKETDTFDTFMESSWYYARYTSPKFAEAMLDADEANYWLPVDQYIGGIEHATMHLLYFRFFHKLLRDAGFVTSDEPADKLLCQGMVLADAFYYTSPTNERIWVSPTEVTLERDEKGRILKAFDKEGRELVHSGMTKMSKSKNNGIDPQEMVEKYGADTVRLFMMFASPAEMTLEWQESGVEGAKRFLGRLWNLVFEYNKHPAETTVEPTALSSAQKALRRDVHKTIAKVSDDIGRRQTFNTAIAAIMELMNKLTKAPLVEVQDRAIMAEALSAVVRMLYPITPHICFQLWKDLGNTEAIDFAPWVEADAAAMVDDEKLVVVQVNGKVRAKVTVPAEMSEDDIKQVALADSNVAKHLEGLNIVKTIYVPGKLFSFVAK.

A 'HIGH' region motif is present at residues 42-52; the sequence is PYPSGRLHMGH. Positions 619 to 623 match the 'KMSKS' region motif; that stretch reads KMSKS. Residue Lys-622 coordinates ATP.

It belongs to the class-I aminoacyl-tRNA synthetase family.

Its subcellular location is the cytoplasm. It catalyses the reaction tRNA(Leu) + L-leucine + ATP = L-leucyl-tRNA(Leu) + AMP + diphosphate. The polypeptide is Leucine--tRNA ligase (Pasteurella multocida (strain Pm70)).